The chain runs to 377 residues: P2Y purinoceptor 2 (377 aa).

At 1–32 (MAADLGPWNDTINGTWDGDELGYRCRFNEDFK) the chain is on the extracellular side. N-linked (GlcNAc...) asparagine glycans are attached at residues Asn-9 and Asn-13. Residues 33-59 (YVLLPVSYGVVCVPGLCLNAVALYIFL) traverse the membrane as a helical segment. Residues 60–70 (CRLKTWNASTT) are Cytoplasmic-facing. The helical transmembrane segment at 71-93 (YMFHLAVSDALYAASLPLLVYYY) threads the bilayer. The Extracellular portion of the chain corresponds to 94–110 (ARGDHWPFSTVLCKLVR). An intrachain disulfide couples Cys-106 to Cys-183. The helical transmembrane segment at 111 to 129 (FLFYTNLYCSILFLTCISV) threads the bilayer. The Cytoplasmic segment spans residues 130–152 (HRCLGVLRPLRSLRWGRARYARR). The chain crosses the membrane as a helical span at residues 153–172 (VAGAVWVLVLACQAPVLYFV). Over 173–194 (TTSARGGRVTCHDTSAPELFSR) the chain is Extracellular. A helical transmembrane segment spans residues 195-220 (FVAYSSVMLGLLFAVPFAVILVCYVL). The Cytoplasmic segment spans residues 221–246 (MARRLLKPAYGTSGGLPRAKRKSVRT). Residues 247-269 (IAVVLAVFALCFLPFHVTRTLYY) traverse the membrane as a helical segment. The Extracellular portion of the chain corresponds to 270–287 (SFRSLDLSCHTLNAINMA). A helical transmembrane segment spans residues 288 to 309 (YKVTRPLASANSCLDPVLYFLA). At 310-377 (GQRLVRFARD…GSENTKDIRL (68 aa)) the chain is on the cytoplasmic side. Positions 318 to 377 (RDAKPPTGPSPATPARRRLGLRRSDRTDMQRIEDVLGSSEDSRRTESTPAGSENTKDIRL) are disordered. Basic and acidic residues predominate over residues 339-363 (RRSDRTDMQRIEDVLGSSEDSRRTE).

It belongs to the G-protein coupled receptor 1 family. In terms of tissue distribution, spleen, testis, kidney, liver, lung, heart and brain.

The protein localises to the cell membrane. Receptor for ATP and UTP coupled to G-proteins that activate a phosphatidylinositol-calcium second messenger system. The affinity range is UTP = ATP &gt; ATP-gamma-S &gt;&gt; 2-methylthio-ATP = ADP. The protein is P2Y purinoceptor 2 (P2RY2) of Homo sapiens (Human).